The chain runs to 229 residues: Glycerol-3-phosphate acyltransferase (229 aa).

6 helical membrane-spanning segments follow: residues 2–22, 56–76, 93–113, 129–149, 151–171, and 178–198; these read WSLTVILLISYFLGSIPGALW, LATVVDFGKGFLAAGVVASVI, FVVLGLLAGVGAVIGHMYPIF, LFALTPLTMAITLAVFVAVLL, SRYVSLSSITAAVAFPTIVAL, and ADLDPSLLVFGGLLALSIVVA.

This sequence belongs to the PlsY family. In terms of assembly, probably interacts with PlsX.

Its subcellular location is the cell inner membrane. The enzyme catalyses an acyl phosphate + sn-glycerol 3-phosphate = a 1-acyl-sn-glycero-3-phosphate + phosphate. The protein operates within lipid metabolism; phospholipid metabolism. In terms of biological role, catalyzes the transfer of an acyl group from acyl-phosphate (acyl-PO(4)) to glycerol-3-phosphate (G3P) to form lysophosphatidic acid (LPA). This enzyme utilizes acyl-phosphate as fatty acyl donor, but not acyl-CoA or acyl-ACP. The protein is Glycerol-3-phosphate acyltransferase of Salinibacter ruber (strain DSM 13855 / M31).